Here is a 132-residue protein sequence, read N- to C-terminus: L-ectoine synthase (132 aa).

This sequence belongs to the ectoine synthase family.

The catalysed reaction is (2S)-4-acetamido-2-aminobutanoate = L-ectoine + H2O. It functions in the pathway amine and polyamine biosynthesis; ectoine biosynthesis; L-ectoine from L-aspartate 4-semialdehyde: step 3/3. Its function is as follows. Catalyzes the circularization of gamma-N-acetyl-alpha,gamma-diaminobutyric acid (ADABA) to ectoine (1,4,5,6-tetrahydro-2-methyl-4-pyrimidine carboxylic acid), which is an excellent osmoprotectant. The protein is L-ectoine synthase of Bordetella avium (strain 197N).